A 174-amino-acid chain; its full sequence is Ferredoxin-thioredoxin reductase, variable chain, chloroplastic (174 aa).

The N-terminal 62 residues, 1–62, are a transit peptide targeting the chloroplast; that stretch reads MTTGVAVMSS…RTRARLAICC (62 aa). Positions 69–81 are enriched in low complexity; it reads DSSTGFDSSSSSP. The disordered stretch occupies residues 69–89; that stretch reads DSSTGFDSSSSSPPEEDEELK. Serine 70 and serine 71 each carry phosphoserine.

It belongs to the ferredoxin thioredoxin reductase alpha subunit family. As to quaternary structure, heterodimer of subunit A (variable subunit) and subunit B (catalytic subunit). Heterodimeric FTR forms a complex with ferredoxin and thioredoxin.

It is found in the plastid. The protein resides in the chloroplast. Variable subunit of the ferredoxin-thioredoxin reductase (FTR), which catalyzes the two-electron reduction of thioredoxins by the electrons provided by reduced ferredoxin. The protein is Ferredoxin-thioredoxin reductase, variable chain, chloroplastic (FTRV) of Spinacia oleracea (Spinach).